A 162-amino-acid polypeptide reads, in one-letter code: Cyclic pyranopterin monophosphate synthase (162 aa).

Residues 75 to 77 (LCH) and 113 to 114 (ME) contribute to the substrate site. The active site involves aspartate 128.

Belongs to the MoaC family. In terms of assembly, homohexamer; trimer of dimers.

The enzyme catalyses (8S)-3',8-cyclo-7,8-dihydroguanosine 5'-triphosphate = cyclic pyranopterin phosphate + diphosphate. It functions in the pathway cofactor biosynthesis; molybdopterin biosynthesis. In terms of biological role, catalyzes the conversion of (8S)-3',8-cyclo-7,8-dihydroguanosine 5'-triphosphate to cyclic pyranopterin monophosphate (cPMP). This chain is Cyclic pyranopterin monophosphate synthase, found in Burkholderia orbicola (strain MC0-3).